Here is a 953-residue protein sequence, read N- to C-terminus: Mannosylglycoprotein endo-beta-mannosidase (953 aa).

Glu461 acts as the Proton donor in catalysis. Catalysis depends on Glu553, which acts as the Nucleophile.

The protein belongs to the glycosyl hydrolase 2 family. Heterotrimer of 31 kDa, 28 kDa and 42 kDa subunits. Post-translationally, the mature enzyme is proteotically cleaved into 3 subunits of 31 kDa, 28 kDa and 42 kDa. In terms of tissue distribution, ubiquitously expressed.

It catalyses the reaction Hydrolysis of the alpha-D-mannosyl-(1-&gt;6)-beta-D-mannosyl-(1-&gt;4)-N-acetyl-beta-D-glucosaminyl-(1-&gt;4)-N-acetyl-beta-D-glucosaminyl sequence of glycoprotein to alpha-D-mannosyl-(1-&gt;6)-D-mannose and N-acetyl-beta-D-glucosaminyl-(1-&gt;4)-N-acetyl-beta-D-glucosaminyl sequences.. In terms of biological role, glycosidase that specifically hydrolyzes the Man-beta-1,4-GlcNAc linkage in the trimannosyl core structure of N-glycans. Does not hydrolyzes pyridylamino derivatives sugar chains containing Man-alpha-1,3-Man-beta or Xylose-beta-1,2-Man-beta. This is Mannosylglycoprotein endo-beta-mannosidase (EBM) from Lilium longiflorum (Trumpet lily).